Here is an 82-residue protein sequence, read N- to C-terminus: ATP synthase subunit c (82 aa).

The next 2 membrane-spanning stretches (helical) occupy residues 6-26 (AAAS…GPGI) and 57-77 (LAFM…LLFA).

Belongs to the ATPase C chain family. In terms of assembly, F-type ATPases have 2 components, F(1) - the catalytic core - and F(0) - the membrane proton channel. F(1) has five subunits: alpha(3), beta(3), gamma(1), delta(1), epsilon(1). F(0) has four main subunits: a(1), b(1), b'(1) and c(10-14). The alpha and beta chains form an alternating ring which encloses part of the gamma chain. F(1) is attached to F(0) by a central stalk formed by the gamma and epsilon chains, while a peripheral stalk is formed by the delta, b and b' chains.

Its subcellular location is the cell inner membrane. Its function is as follows. F(1)F(0) ATP synthase produces ATP from ADP in the presence of a proton or sodium gradient. F-type ATPases consist of two structural domains, F(1) containing the extramembraneous catalytic core and F(0) containing the membrane proton channel, linked together by a central stalk and a peripheral stalk. During catalysis, ATP synthesis in the catalytic domain of F(1) is coupled via a rotary mechanism of the central stalk subunits to proton translocation. In terms of biological role, key component of the F(0) channel; it plays a direct role in translocation across the membrane. A homomeric c-ring of between 10-14 subunits forms the central stalk rotor element with the F(1) delta and epsilon subunits. The sequence is that of ATP synthase subunit c from Gloeobacter violaceus (strain ATCC 29082 / PCC 7421).